The following is a 290-amino-acid chain: Probable proteasome subunit beta type-6 (290 aa).

It belongs to the peptidase T1B family. As to quaternary structure, the 26S proteasome consists of a 20S proteasome core and two 19S regulatory subunits. The 20S proteasome core is composed of 28 subunits that are arranged in four stacked rings, resulting in a barrel-shaped structure. The two end rings are each formed by seven alpha subunits, and the two central rings are each formed by seven beta subunits. The catalytic chamber with the active sites is on the inside of the barrel.

Its subcellular location is the cytoplasm. It localises to the nucleus. Its function is as follows. Non-catalytic component of the proteasome which degrades poly-ubiquitinated proteins in the cytoplasm and in the nucleus. It is essential for the regulated turnover of proteins and for the removal of misfolded proteins. The proteasome is a multicatalytic proteinase complex that is characterized by its ability to cleave peptides with Arg, Phe, Tyr, Leu, and Glu adjacent to the leaving group at neutral or slightly basic pH. It has an ATP-dependent proteolytic activity. The polypeptide is Probable proteasome subunit beta type-6 (PRE7) (Encephalitozoon cuniculi (strain GB-M1) (Microsporidian parasite)).